We begin with the raw amino-acid sequence, 110 residues long: Putative membrane protein insertion efficiency factor (110 aa).

This sequence belongs to the UPF0161 family.

The protein localises to the cell inner membrane. Could be involved in insertion of integral membrane proteins into the membrane. The polypeptide is Putative membrane protein insertion efficiency factor (Aliarcobacter butzleri (strain RM4018) (Arcobacter butzleri)).